A 264-amino-acid polypeptide reads, in one-letter code: Acyl-[acyl-carrier-protein]--UDP-N-acetylglucosamine O-acyltransferase (264 aa).

Belongs to the transferase hexapeptide repeat family. LpxA subfamily. Homotrimer.

The protein resides in the cytoplasm. The catalysed reaction is a (3R)-hydroxyacyl-[ACP] + UDP-N-acetyl-alpha-D-glucosamine = a UDP-3-O-[(3R)-3-hydroxyacyl]-N-acetyl-alpha-D-glucosamine + holo-[ACP]. It functions in the pathway glycolipid biosynthesis; lipid IV(A) biosynthesis; lipid IV(A) from (3R)-3-hydroxytetradecanoyl-[acyl-carrier-protein] and UDP-N-acetyl-alpha-D-glucosamine: step 1/6. Involved in the biosynthesis of lipid A, a phosphorylated glycolipid that anchors the lipopolysaccharide to the outer membrane of the cell. This Leptothrix cholodnii (strain ATCC 51168 / LMG 8142 / SP-6) (Leptothrix discophora (strain SP-6)) protein is Acyl-[acyl-carrier-protein]--UDP-N-acetylglucosamine O-acyltransferase.